The primary structure comprises 95 residues: Leukocyte-specific transcript 1 protein (95 aa).

The chain crosses the membrane as a helical span at residues 22 to 42; that stretch reads LGLGGLLLLLVIILFICLCGF. Serine 64 carries the post-translational modification Phosphoserine.

This sequence belongs to the LST1 family. Expressed in spleen and at lower levels in thymus and liver.

Its subcellular location is the membrane. In terms of biological role, possible role in modulating immune responses. Has an inhibitory effect on lymphocyte proliferation. Induces morphological changes including production of filopodia and microspikes when overexpressed in a variety of cell types and may be involved in dendritic cell maturation. The sequence is that of Leukocyte-specific transcript 1 protein (Lst1) from Mus musculus (Mouse).